The primary structure comprises 275 residues: NH(3)-dependent NAD(+) synthetase (275 aa).

46 to 53 (GISGGQDS) is an ATP binding site. Asp-52 lines the Mg(2+) pocket. Position 140 (Arg-140) interacts with deamido-NAD(+). Residue Thr-160 coordinates ATP. A Mg(2+)-binding site is contributed by Glu-165. Residues Lys-173 and Asp-180 each coordinate deamido-NAD(+). The ATP site is built by Lys-189 and Thr-211. 260–261 (HK) contributes to the deamido-NAD(+) binding site.

This sequence belongs to the NAD synthetase family. As to quaternary structure, homodimer.

It catalyses the reaction deamido-NAD(+) + NH4(+) + ATP = AMP + diphosphate + NAD(+) + H(+). Its pathway is cofactor biosynthesis; NAD(+) biosynthesis; NAD(+) from deamido-NAD(+) (ammonia route): step 1/1. Functionally, catalyzes the ATP-dependent amidation of deamido-NAD to form NAD. Uses ammonia as a nitrogen source. This is NH(3)-dependent NAD(+) synthetase from Shigella boydii serotype 18 (strain CDC 3083-94 / BS512).